A 195-amino-acid polypeptide reads, in one-letter code: Granulocyte colony-stimulating factor (195 aa).

Residues 1 to 21 form the signal peptide; sequence MKLMVLQLLLWHSALWTVHEA. 2 disulfides stabilise this stretch: Cys-57–Cys-63 and Cys-85–Cys-95. The O-linked (GalNAc...) threonine glycan is linked to Thr-154.

This sequence belongs to the IL-6 superfamily. As to quaternary structure, monomer. In terms of processing, O-glycosylated.

The protein resides in the secreted. In terms of biological role, granulocyte/macrophage colony-stimulating factors are cytokines that act in hematopoiesis by controlling the production, differentiation, and function of 2 related white cell populations of the blood, the granulocytes and the monocytes-macrophages. This CSF induces granulocytes. This chain is Granulocyte colony-stimulating factor (CSF3), found in Bos taurus (Bovine).